The primary structure comprises 739 residues: Platelet endothelial cell adhesion molecule (739 aa).

The N-terminal stretch at 1–27 (MQLRWTQRGMMWLGALLTLLLCSSLKG) is a signal peptide. Over 28 to 599 (QENSFTINSI…TVRVYLPLEK (572 aa)) the chain is Extracellular. Ig-like C2-type domains are found at residues 35-120 (NSIH…EKTT), 145-213 (GGVV…IFSG), and 236-315 (PKFH…SKVS). Residues Asn-52, Asn-84, and Asn-151 are each glycosylated (N-linked (GlcNAc...) asparagine). Cys-57 and Cys-109 form a disulfide bridge. Cystine bridges form between Cys-152-Cys-206 and Cys-256-Cys-304. Residues Asn-301, Asn-320, Asn-356, Asn-371, Asn-435, Asn-446, Asn-453, Asn-550, and Asn-578 are each glycosylated (N-linked (GlcNAc...) asparagine). 3 Ig-like C2-type domains span residues 328–403 (PKLE…VQIT), 424–493 (GQTI…EVLR), and 499–590 (PVDE…NTLT). 3 disulfide bridges follow: Cys-347-Cys-386, Cys-431-Cys-476, and Cys-522-Cys-571. A helical membrane pass occupies residues 600 to 618 (GLIAVVVIGVIIVTLVLGA). The Cytoplasmic portion of the chain corresponds to 619–739 (KCYFLKKAKA…SRTEGSLDGS (121 aa)). Residue Cys-620 is the site of S-palmitoyl cysteine attachment. 2 consecutive short sequence motifs (ITIM motif) follow at residues 687–692 (VEYTEV) and 712–717 (TVYSEI). Phosphotyrosine; by FER occurs at positions 689 and 714. Positions 708 to 730 (TETETVYSEIRKADPDFVENRYS) are membrane-bound segment which detaches upon phosphorylation. A may play a role in cytoprotective signaling region spans residues 722 to 739 (PDFVENRYSRTEGSLDGS). Residues Ser-730 and Ser-735 each carry the phosphoserine modification.

In terms of assembly, trans-homodimer (via Ig-like C2-type 1 and Ig-like C2-type 2 domains); trans-homodimerization is required for cell-cell interaction. Forms a complex with BDKRB2 and GNAQ. Interacts with BDKRB2 and GNAQ. Interacts with PTPN11; Tyr-714 is critical for PTPN11 recruitment. Interacts with FER. Interacts with CD177; the interaction is Ca(2+)-dependent; the interaction is direct. Post-translationally, phosphorylated on Ser and Tyr residues by src kinases after cellular activation. Upon activation, phosphorylated on Ser-730 which probably initiates the dissociation of the membrane-interaction segment (residues 708-730) from the cell membrane allowing the sequential phosphorylation of Tyr-714 and Tyr-689. Constitutively phosphorylated on Ser-735 in resting platelets. Phosphorylated on tyrosine residues by FER and FES in response to FCER1 activation. In endothelial cells Fyn mediates mechanical-force (stretch or pull) induced tyrosine phosphorylation. In terms of processing, palmitoylation by ZDHHC21 is necessary for cell surface expression in endothelial cells and enrichment in membrane rafts.

It localises to the cell membrane. The protein resides in the membrane raft. Its subcellular location is the cell junction. Cell adhesion molecule which is required for leukocyte transendothelial migration (TEM) under most inflammatory conditions. Tyr-689 plays a critical role in TEM and is required for efficient trafficking of PECAM1 to and from the lateral border recycling compartment (LBRC) and is also essential for the LBRC membrane to be targeted around migrating leukocytes. Trans-homophilic interaction may play a role in endothelial cell-cell adhesion via cell junctions. Heterophilic interaction with CD177 plays a role in transendothelial migration of neutrophils. Homophilic ligation of PECAM1 prevents macrophage-mediated phagocytosis of neighboring viable leukocytes by transmitting a detachment signal. Promotes macrophage-mediated phagocytosis of apoptotic leukocytes by tethering them to the phagocytic cells; PECAM1-mediated detachment signal appears to be disabled in apoptotic leukocytes. Modulates bradykinin receptor BDKRB2 activation. Regulates bradykinin- and hyperosmotic shock-induced ERK1/2 activation in endothelial cells. Induces susceptibility to atherosclerosis. This Bos taurus (Bovine) protein is Platelet endothelial cell adhesion molecule (PECAM1).